Reading from the N-terminus, the 118-residue chain is Large ribosomal subunit protein bL20 (118 aa).

The protein belongs to the bacterial ribosomal protein bL20 family.

Functionally, binds directly to 23S ribosomal RNA and is necessary for the in vitro assembly process of the 50S ribosomal subunit. It is not involved in the protein synthesizing functions of that subunit. The polypeptide is Large ribosomal subunit protein bL20 (Staphylococcus saprophyticus subsp. saprophyticus (strain ATCC 15305 / DSM 20229 / NCIMB 8711 / NCTC 7292 / S-41)).